We begin with the raw amino-acid sequence, 725 residues long: Catalase-peroxidase (725 aa).

The tryptophyl-tyrosyl-methioninium (Trp-Tyr) (with M-253) cross-link spans 99 to 227; sequence WHAAGTYRIA…LAAVMMGLIY (129 aa). The active-site Proton acceptor is the H100. Residues 227-253 constitute a cross-link (tryptophyl-tyrosyl-methioninium (Tyr-Met) (with W-99)); sequence YVNPEGVDGNPDPLKTAHDIRITFSRM. A heme b-binding site is contributed by H268.

Belongs to the peroxidase family. Peroxidase/catalase subfamily. As to quaternary structure, homodimer or homotetramer. Requires heme b as cofactor. In terms of processing, formation of the three residue Trp-Tyr-Met cross-link is important for the catalase, but not the peroxidase activity of the enzyme.

The catalysed reaction is H2O2 + AH2 = A + 2 H2O. It carries out the reaction 2 H2O2 = O2 + 2 H2O. In terms of biological role, bifunctional enzyme with both catalase and broad-spectrum peroxidase activity. The polypeptide is Catalase-peroxidase (Picosynechococcus sp. (strain ATCC 27264 / PCC 7002 / PR-6) (Agmenellum quadruplicatum)).